The following is a 545-amino-acid chain: MSKSTKKFNSLCIDLSRDLSLEVYQSIASVATGSSDPHSDDFTAIAYLRDELLTKHPNLGDGNDEATRRSLAIAKLLEANDRCGQINRDGFLHDATASWDPDVLQTSIRSLIGNLLSGYSSQLFRHCTFSNGASMGHKLQDAAPYKKFAEQATVTPRALKAAVLVKDQCSPWIRHSHVFPESYTFRLVGGNGVFTVPKNNKIDRAACKEPDMNMYLQKGVGGFIRRRLKTVGIDLNDQTINQRLAQQGSRDGSLATIDLSSASDSISDRLVWSFLPPELYSYLDMIRSHYGYVNGKMIRWELFSTMGNGFTFELESMIFWAIVRATQIHFRNTGTIGIYGDDIICPTEIAPRVLEALSFYGFKPNLRKTFTSGSFRESCGAHYFRGVDVKPFYIKKPITDLFSLMLILNRIRGWGVVNGIADPRLYEVWEKLSRLVPRYLFGGTDLQADYYVVSPPILKGIYSKMNGRREYAEARTTGFKLARIARWRKHFSDKHDSGRYIAWFHTGGEITDSMKSAGVRVMRTSEWLQPVPVFPQECGPASSPQ.

One can recognise a RdRp catalytic domain in the interval 243-373; sequence RLAQQGSRDG…PNLRKTFTSG (131 aa).

As to quaternary structure, part of the viral RNA-dependent RNA polymerase complex, the other subunits are probably the host ribosomal protein S1, EF-Tu and EF-Ts.

The enzyme catalyses RNA(n) + a ribonucleoside 5'-triphosphate = RNA(n+1) + diphosphate. This is the catalytic subunit of the viral RNA-dependent RNA polymerase complex. This complex is involved in viral RNA replication that produces (+)-stranded genomes via a complementary, (-)-stranded intermediate. The polypeptide is RNA-directed RNA polymerase beta chain (Enterobacteria phage fr (Bacteriophage fr)).